Reading from the N-terminus, the 59-residue chain is Large ribosomal subunit protein bL32 (59 aa).

The segment at 1–59 is disordered; that stretch reads MAVQQNKKSPSKRGMHRSHDFLTNPPLAVEPTSGEIHLRHHVSPNGYYRGRKVLPAKGE. Basic residues predominate over residues 49-59; the sequence is RGRKVLPAKGE.

Belongs to the bacterial ribosomal protein bL32 family.

The protein is Large ribosomal subunit protein bL32 of Methylobacillus flagellatus (strain ATCC 51484 / DSM 6875 / VKM B-1610 / KT).